Reading from the N-terminus, the 431-residue chain is Chaperone SurA (431 aa).

Residues 1-22 (MNLKKLLTSAVLSISLCQSAFA) form the signal peptide. PpiC domains follow at residues 173 to 274 (AEEY…KVQD) and 283 to 383 (TTET…QLLD).

It is found in the periplasm. The catalysed reaction is [protein]-peptidylproline (omega=180) = [protein]-peptidylproline (omega=0). Its function is as follows. Chaperone involved in the correct folding and assembly of outer membrane proteins. Recognizes specific patterns of aromatic residues and the orientation of their side chains, which are found more frequently in integral outer membrane proteins. May act in both early periplasmic and late outer membrane-associated steps of protein maturation. The protein is Chaperone SurA of Pseudoalteromonas translucida (strain TAC 125).